The chain runs to 462 residues: 3-ketoacyl CoA thiolase 1, peroxisomal (462 aa).

A peroxisome-targeting transit peptide spans Met1–Cys34. Cys138 acts as the Acyl-thioester intermediate in catalysis. Catalysis depends on proton acceptor residues His393 and Cys425. Gly427 contributes to the substrate binding site.

Belongs to the thiolase-like superfamily. Thiolase family. In terms of assembly, homodimer.

The protein localises to the peroxisome. The enzyme catalyses an acyl-CoA + acetyl-CoA = a 3-oxoacyl-CoA + CoA. It participates in aromatic compound metabolism. The protein operates within lipid metabolism; fatty acid metabolism. Functionally, component of the floral volatile benzenoid/phenylpropanoid (FVBP) biosynthetic pathway. Thiolase that catalyzes the conversion of 3-oxo-3-phenylpropionyl-CoA (benzoylacetyl-CoA) to benzoyl-CoA. This Petunia hybrida (Petunia) protein is 3-ketoacyl CoA thiolase 1, peroxisomal.